The chain runs to 595 residues: Wee1-like protein kinase 1-B (595 aa).

The segment covering 1-17 (MNVQPRNMNVQPRNMNV) has biased composition (polar residues). The tract at residues 1-127 (MNVQPRNMNV…CPGTPPHKTF (127 aa)) is disordered. Positions 111–122 (PTSPIPECPGTP) are enriched in pro residues. The residue at position 186 (T186) is a Phosphothreonine; by cdk1. The 271-residue stretch at 248 to 518 (FHELEKIGSG…SVALVKHSVL (271 aa)) folds into the Protein kinase domain. ATP is bound by residues 254 to 262 (IGSGEFGSV) and K277. D375 (proton acceptor) is an active-site residue. Residues N380 and D412 each coordinate Mg(2+). A coiled-coil region spans residues 526–563 (AEQLRIELDAEKFKNALLQKELKKAQIAKAAAEERAHF).

It belongs to the protein kinase superfamily. Ser/Thr protein kinase family. WEE1 subfamily. As to quaternary structure, interacts (when phosphorylated at Thr-186) with pin1. In terms of processing, phosphorylation at Thr-186 during M-phase by cdk1 inhibits the kinase activity and leads to interaction with pin1. In terms of tissue distribution, zygotically expressed. Present in oocytes and postgastrula embryos (at least until the tailbud stage). Expression begins at the midblastula stage and increases after the early gastrula stage.

Its subcellular location is the nucleus. It catalyses the reaction L-tyrosyl-[protein] + ATP = O-phospho-L-tyrosyl-[protein] + ADP + H(+). Its function is as follows. Acts as a zygotic negative regulator of entry into mitosis (G2 to M transition) by protecting the nucleus from cytoplasmically activated cyclin B1-complexed cdk1 before the onset of mitosis by mediating phosphorylation of cdk1 on 'Tyr-15'. Specifically phosphorylates and inactivates cyclin B1-complexed cdk1 reaching a maximum during G2 phase and a minimum as cells enter M phase. Phosphorylation of cyclin B1-cdk1 occurs exclusively on 'Tyr-15' and phosphorylation of monomeric cdk1 does not occur. The protein is Wee1-like protein kinase 1-B (wee1-b) of Xenopus laevis (African clawed frog).